A 1283-amino-acid polypeptide reads, in one-letter code: Oxysterol-binding protein homolog 2 (1283 aa).

Serine 2 bears the N-acetylserine mark. Serine 7 carries the phosphoserine modification. ANK repeat units lie at residues asparagine 106 to aspartate 134 and threonine 206 to valine 235. The 98-residue stretch at proline 289–arginine 386 folds into the PH domain. 7 positions are modified to phosphoserine: serine 422, serine 445, serine 451, serine 455, serine 458, serine 459, and serine 486. Position 488 is a phosphothreonine (threonine 488). 2 stretches are compositionally biased toward polar residues: residues serine 504 to glycine 518 and alanine 530 to isoleucine 551. 2 disordered regions span residues serine 504–asparagine 571 and threonine 702–alanine 721. A phosphoserine mark is found at serine 512 and serine 515. Positions phenylalanine 554–leucine 568 are enriched in acidic residues. Residues glutamate 707 to glutamate 716 show a composition bias toward basic and acidic residues. Serine 717 bears the Phosphoserine mark. Residues glutamate 745–glutamate 751 carry the FFAT motif. Positions serine 767–lysine 834 are disordered. Threonine 783 is subject to Phosphothreonine. The residue at position 787 (serine 787) is a Phosphoserine. 2 stretches are compositionally biased toward basic and acidic residues: residues glutamine 791 to lysine 810 and aspartate 818 to lysine 834. Phosphoserine occurs at positions 825 and 1151. Residues serine 897 to tryptophan 1268 form an OSBP-related domain (ORD) region.

It belongs to the OSBP family. Interacts with SCS2.

It is found in the cell membrane. Its subcellular location is the endoplasmic reticulum membrane. In terms of biological role, lipid transport protein (LTP) involved in non-vesicular transfer of lipids between membranes. Functions in phosphoinositide-coupled directional transport of various lipids by carrying the lipid molecule in a hydrophobic pocket and transferring it between membranes through the cytosol. Involved in maintenance of intracellular sterol distribution and homeostasis. Binds and transports sterol. Plays a role in the positive regulation of vesicular transport of ceramide from the ER to the Golgi, negatively regulating COPII-mediated ER export of cargos. The protein is Oxysterol-binding protein homolog 2 of Saccharomyces cerevisiae (strain ATCC 204508 / S288c) (Baker's yeast).